The primary structure comprises 340 residues: DNA-directed RNA polymerase subunit alpha (340 aa).

Residues 1–236 (MLSLSKNWNT…EQLQLFIAFE (236 aa)) form an alpha N-terminal domain (alpha-NTD) region. Residues 251-340 (FSPYLLKRVD…LSKRYEDSYN (90 aa)) form an alpha C-terminal domain (alpha-CTD) region.

This sequence belongs to the RNA polymerase alpha chain family. Homodimer. The RNAP catalytic core consists of 2 alpha, 1 beta, 1 beta' and 1 omega subunit. When a sigma factor is associated with the core the holoenzyme is formed, which can initiate transcription.

The enzyme catalyses RNA(n) + a ribonucleoside 5'-triphosphate = RNA(n+1) + diphosphate. DNA-dependent RNA polymerase catalyzes the transcription of DNA into RNA using the four ribonucleoside triphosphates as substrates. This is DNA-directed RNA polymerase subunit alpha from Rickettsia typhi (strain ATCC VR-144 / Wilmington).